Consider the following 696-residue polypeptide: DNA topoisomerase 6 subunit B (696 aa).

Residues 1–36 (MDDDAGDGAASGGTKRKVTAASSSAAAKGKAAGKGK) form a disordered region. The segment covering 20 to 36 (AASSSAAAKGKAAGKGK) has biased composition (low complexity). Residues asparagine 88, aspartate 187, 208–209 (TK), 217–224 (GKFGLGAK), and lysine 543 each bind ATP.

The protein belongs to the TOP6B family. Homodimer. Heterotetramer of two TOP6A and two TOP6B subunits. Interacts with SPO11-2 and TOP6A3. As to expression, highly expressed in flowers before pollination. Expressed in roots and shoots.

It is found in the nucleus. The enzyme catalyses ATP-dependent breakage, passage and rejoining of double-stranded DNA.. In terms of biological role, component of the DNA topoisomerase VI involved in chromatin organization and progression of endoreduplication cycles. Relaxes both positive and negative superturns and exhibits a strong decatenase activity. The B subunit binds ATP. May be involved in cell proliferation and stress tolerance. This Oryza sativa subsp. indica (Rice) protein is DNA topoisomerase 6 subunit B.